We begin with the raw amino-acid sequence, 157 residues long: Transcriptional repressor NrdR (157 aa).

The interval 1 to 21 is disordered; sequence MRCPYCSSEDSQVKDSRPAED. A zinc finger spans residues 3-34; sequence CPYCSSEDSQVKDSRPAEDGNAIRRRRICPDC. Residues 11–21 are compositionally biased toward basic and acidic residues; the sequence is SQVKDSRPAED. Residues 49-139 enclose the ATP-cone domain; that stretch reads LMIIKKTGRK…VYRDFSHAED (91 aa).

It belongs to the NrdR family. Requires Zn(2+) as cofactor.

Negatively regulates transcription of bacterial ribonucleotide reductase nrd genes and operons by binding to NrdR-boxes. In Sinorhizobium fredii (strain NBRC 101917 / NGR234), this protein is Transcriptional repressor NrdR.